The sequence spans 353 residues: Quinolinate synthase (353 aa).

2 residues coordinate iminosuccinate: His-47 and Ser-68. Cys-113 lines the [4Fe-4S] cluster pocket. Iminosuccinate-binding positions include 139-141 (YAN) and Ser-156. Cys-200 provides a ligand contact to [4Fe-4S] cluster. Iminosuccinate contacts are provided by residues 226–228 (HPE) and Thr-243. [4Fe-4S] cluster is bound at residue Cys-297.

The protein belongs to the quinolinate synthase family. Type 1 subfamily. [4Fe-4S] cluster serves as cofactor.

The protein localises to the cytoplasm. It catalyses the reaction iminosuccinate + dihydroxyacetone phosphate = quinolinate + phosphate + 2 H2O + H(+). It functions in the pathway cofactor biosynthesis; NAD(+) biosynthesis; quinolinate from iminoaspartate: step 1/1. Its function is as follows. Catalyzes the condensation of iminoaspartate with dihydroxyacetone phosphate to form quinolinate. The protein is Quinolinate synthase of Serratia proteamaculans (strain 568).